The following is a 251-amino-acid chain: CDP-diacylglycerol pyrophosphatase (251 aa).

The helical transmembrane segment at 4–24 (AGLLFLVMIVIAVVASGIGYW) threads the bilayer.

This sequence belongs to the Cdh family.

Its subcellular location is the cell inner membrane. It catalyses the reaction a CDP-1,2-diacyl-sn-glycerol + H2O = a 1,2-diacyl-sn-glycero-3-phosphate + CMP + 2 H(+). The protein operates within phospholipid metabolism; CDP-diacylglycerol degradation; phosphatidate from CDP-diacylglycerol: step 1/1. The chain is CDP-diacylglycerol pyrophosphatase from Escherichia coli O8 (strain IAI1).